The sequence spans 352 residues: Small ribosomal subunit biogenesis GTPase RsgA (352 aa).

Over residues 1–15 the composition is skewed to basic residues; the sequence is MTKRKLTQNQKRRIH. The disordered stretch occupies residues 1–26; it reads MTKRKLTQNQKRRIHSNNVKALDRHH. Residues 106–274 enclose the CP-type G domain; that stretch reads ENEIARPDYY…LIDSPGIREF (169 aa). GTP-binding positions include 162–165 and 216–224; these read NKVD and GQSGVGKSS. Residues Cys298, Cys303, His305, and Cys311 each contribute to the Zn(2+) site.

The protein belongs to the TRAFAC class YlqF/YawG GTPase family. RsgA subfamily. Monomer. Associates with 30S ribosomal subunit, binds 16S rRNA. Zn(2+) serves as cofactor.

Its subcellular location is the cytoplasm. Functionally, one of several proteins that assist in the late maturation steps of the functional core of the 30S ribosomal subunit. Helps release RbfA from mature subunits. May play a role in the assembly of ribosomal proteins into the subunit. Circularly permuted GTPase that catalyzes slow GTP hydrolysis, GTPase activity is stimulated by the 30S ribosomal subunit. In Mannheimia succiniciproducens (strain KCTC 0769BP / MBEL55E), this protein is Small ribosomal subunit biogenesis GTPase RsgA.